The primary structure comprises 227 residues: Large ribosomal subunit protein bL25 (227 aa).

Residues 1-22 (MAETKTLAAAARHGTGKGAARS) form a disordered region.

This sequence belongs to the bacterial ribosomal protein bL25 family. CTC subfamily. In terms of assembly, part of the 50S ribosomal subunit; part of the 5S rRNA/L5/L18/L25 subcomplex. Contacts the 5S rRNA. Binds to the 5S rRNA independently of L5 and L18.

In terms of biological role, this is one of the proteins that binds to the 5S RNA in the ribosome where it forms part of the central protuberance. This is Large ribosomal subunit protein bL25 from Methylocella silvestris (strain DSM 15510 / CIP 108128 / LMG 27833 / NCIMB 13906 / BL2).